The sequence spans 233 residues: Pyridoxal phosphate homeostasis protein (233 aa).

N6-(pyridoxal phosphate)lysine is present on Lys35.

The protein belongs to the pyridoxal phosphate-binding protein YggS/PROSC family.

In terms of biological role, pyridoxal 5'-phosphate (PLP)-binding protein, which is involved in PLP homeostasis. The chain is Pyridoxal phosphate homeostasis protein from Pasteurella multocida (strain Pm70).